A 378-amino-acid polypeptide reads, in one-letter code: Protein RecA (378 aa).

G79–T86 contacts ATP.

It belongs to the RecA family.

The protein localises to the cytoplasm. Its function is as follows. Can catalyze the hydrolysis of ATP in the presence of single-stranded DNA, the ATP-dependent uptake of single-stranded DNA by duplex DNA, and the ATP-dependent hybridization of homologous single-stranded DNAs. It interacts with LexA causing its activation and leading to its autocatalytic cleavage. The protein is Protein RecA of Streptococcus pyogenes serotype M28 (strain MGAS6180).